The chain runs to 427 residues: MATIEGIVAREILDSRGNPTVEVEVGLDDGTIARAAVPSGASTGAFEAIELRDGDKDRYLGKGVATAVSNIEDKIVDELIGYEASEQRLIDQKMLDIDGTDNKSELGANAILGVSLAVAKAAADSAELTLYRYLGGPNAHLLPVPMMNILNGGAHADSNVDIQEFMIAPIGAPTFREALRSGAEVYHALKSVLKKKDLATGLGDEGGFAPNLPTNAAALDLIAEAVEKAGYRLGTDIVFALDVAATEFFANGTYTFEGAAKTAEEMSSYYTKLADAYPIVSIEDPLAEDDWSGWQTLTASVGDRIQIVGDDLFVTNPQRIARGIAEHAANAVLVKVNQIGSLTETLDAVDLAHRAGFRCMMSHRSGETEDTTIADLAVATGCGQIKTGAPARSDRVAKYNQLLRIEEELADAARYAGAGAFPRYRSA.

Gln-163 is a (2R)-2-phosphoglycerate binding site. Glu-205 serves as the catalytic Proton donor. Mg(2+) is bound by residues Asp-242, Glu-283, and Asp-310. (2R)-2-phosphoglycerate-binding residues include Lys-335, Arg-364, Ser-365, and Lys-386. Lys-335 functions as the Proton acceptor in the catalytic mechanism.

The protein belongs to the enolase family. Mg(2+) is required as a cofactor.

It is found in the cytoplasm. The protein localises to the secreted. It localises to the cell surface. It catalyses the reaction (2R)-2-phosphoglycerate = phosphoenolpyruvate + H2O. The protein operates within carbohydrate degradation; glycolysis; pyruvate from D-glyceraldehyde 3-phosphate: step 4/5. Catalyzes the reversible conversion of 2-phosphoglycerate (2-PG) into phosphoenolpyruvate (PEP). It is essential for the degradation of carbohydrates via glycolysis. The protein is Enolase of Salinispora arenicola (strain CNS-205).